Consider the following 332-residue polypeptide: o-succinylbenzoate synthase (332 aa).

K135 (proton donor) is an active-site residue. Mg(2+) contacts are provided by D163, E192, and D215. K241 (proton acceptor) is an active-site residue.

It belongs to the mandelate racemase/muconate lactonizing enzyme family. MenC type 1 subfamily. It depends on a divalent metal cation as a cofactor.

It carries out the reaction (1R,6R)-6-hydroxy-2-succinyl-cyclohexa-2,4-diene-1-carboxylate = 2-succinylbenzoate + H2O. It functions in the pathway quinol/quinone metabolism; 1,4-dihydroxy-2-naphthoate biosynthesis; 1,4-dihydroxy-2-naphthoate from chorismate: step 4/7. It participates in quinol/quinone metabolism; menaquinone biosynthesis. Its function is as follows. Converts 2-succinyl-6-hydroxy-2,4-cyclohexadiene-1-carboxylate (SHCHC) to 2-succinylbenzoate (OSB). The protein is o-succinylbenzoate synthase of Vibrio cholerae serotype O1 (strain ATCC 39315 / El Tor Inaba N16961).